We begin with the raw amino-acid sequence, 250 residues long: Urease accessory protein UreD (250 aa).

The protein belongs to the UreD family. In terms of assembly, ureD, UreF and UreG form a complex that acts as a GTP-hydrolysis-dependent molecular chaperone, activating the urease apoprotein by helping to assemble the nickel containing metallocenter of UreC. The UreE protein probably delivers the nickel.

The protein resides in the cytoplasm. Its function is as follows. Required for maturation of urease via the functional incorporation of the urease nickel metallocenter. In Aliarcobacter butzleri (strain RM4018) (Arcobacter butzleri), this protein is Urease accessory protein UreD.